Consider the following 86-residue polypeptide: Toxin Td8 (86 aa).

A signal peptide spans 1-20; sequence MTRFVLFLSCFFLIGMVVEC. Residues 21-83 form the LCN-type CS-alpha/beta domain; sequence KDGYLVGDDG…IWNSATNRCR (63 aa). Cystine bridges form between cysteine 31-cysteine 82, cysteine 35-cysteine 57, cysteine 43-cysteine 63, and cysteine 47-cysteine 65. Position 83 is an arginine amide (arginine 83).

As to expression, expressed by the venom gland.

It localises to the secreted. Functionally, beta toxins bind voltage-independently at site-4 of sodium channels (Nav) and shift the voltage of activation toward more negative potentials thereby affecting sodium channel activation and promoting spontaneous and repetitive firing. The protein is Toxin Td8 of Tityus discrepans (Venezuelan scorpion).